The sequence spans 262 residues: Abhydrolase domain-containing protein AFT2-1 (262 aa).

Residues 260 to 262 carry the Peroxisomal targeting signal type 1 motif; that stretch reads SKL.

This sequence belongs to the AB hydrolase superfamily. AKT2 hydrolase family.

The protein localises to the peroxisome. It functions in the pathway mycotoxin biosynthesis. Functionally, abhydrolase domain-containing protein; part of the gene clusters that mediate the biosynthesis of the host-selective toxins (HSTs) AF-toxins responsible for Alternaria black spot of strawberry disease by the strawberry pathotype. AF-toxin I and III are valine derivatives of 2,3-dyhydroxy-isovaleric acid and 2-hydroxy-isovaleric acid respectively, while AF II is an isoleucine derivative of 2-hydroxy-valeric acid. These derivatives are bound to a 9,10-epoxy-8-hydroxy-9-methyl-decatrienoic acid (EDA) moiety. On cellular level, AF-toxins affect plasma membrane of susceptible cells and cause a sudden increase in loss of K(+) after a few minutes of toxin treatment. The aldo-keto reductase AFTS1 catalyzes the conversion of 2-keto-isovaleric acid (2-KIV) to 2-hydroxy-isovaleric acid (2-HIV) by reduction of its ketone to an alcohol. The acyl-CoA ligase AFT1, the hydrolase AFT2 and the enoyl-CoA hydratases AFT3 and AFT6, but also the polyketide synthase AFT9, the acyl-CoA dehydrogenase AFT10, the cytochrome P450 monooxygenase AFT11 and the oxidoreductase AFT12 are all involved in the biosynthesis of the AK-, AF- and ACT-toxin common EDA structural moiety. The exact function of each enzyme, and of additional enzymes identified within the AF-toxin clusters have still to be determined. This Alternaria alternata (Alternaria rot fungus) protein is Abhydrolase domain-containing protein AFT2-1.